Reading from the N-terminus, the 206-residue chain is Tetrathionate response regulatory protein TtrR (206 aa).

In terms of domain architecture, Response regulatory spans 3-117 (TIHLLDDDTA…PLQAALERAL (115 aa)). Position 52 is a 4-aspartylphosphate (Asp-52). An HTH luxR-type domain is found at 134 to 194 (QQLTPKEREL…ELIRRFEKMA (61 aa)). Positions 153–172 (NREIAEAMNIAVRTVEVHRA) form a DNA-binding region, H-T-H motif.

Phosphorylated by TtrS.

It is found in the cytoplasm. In terms of biological role, member of the two-component regulatory system TtrR/TtrS, which is required for synthesis of tetrathionate reductase. Positively regulates transcription of the ttrBCA operon. During mice infection, the ability to use tetrathionate as an electron acceptor is a growth advantage for S.typhimurium over the competing microbiota in the lumen of the inflamed gut. This Salmonella typhimurium (strain LT2 / SGSC1412 / ATCC 700720) protein is Tetrathionate response regulatory protein TtrR (ttrR).